Consider the following 428-residue polypeptide: Adenylosuccinate synthetase (428 aa).

GTP contacts are provided by residues 12–18 (GDEGKGK) and 40–42 (GHT). Aspartate 13 acts as the Proton acceptor in catalysis. The Mg(2+) site is built by aspartate 13 and glycine 40. Residues 13–16 (DEGK), 38–41 (NAGH), threonine 128, arginine 142, glutamine 222, threonine 237, and arginine 301 contribute to the IMP site. The active-site Proton donor is histidine 41. A substrate-binding site is contributed by 297 to 303 (VNTGRAR). GTP contacts are provided by residues arginine 303, 329–331 (KLD), and 411–413 (STS).

Belongs to the adenylosuccinate synthetase family. As to quaternary structure, homodimer. Requires Mg(2+) as cofactor.

The protein resides in the cytoplasm. It catalyses the reaction IMP + L-aspartate + GTP = N(6)-(1,2-dicarboxyethyl)-AMP + GDP + phosphate + 2 H(+). The protein operates within purine metabolism; AMP biosynthesis via de novo pathway; AMP from IMP: step 1/2. Functionally, plays an important role in the de novo pathway of purine nucleotide biosynthesis. Catalyzes the first committed step in the biosynthesis of AMP from IMP. The sequence is that of Adenylosuccinate synthetase from Caulobacter vibrioides (strain ATCC 19089 / CIP 103742 / CB 15) (Caulobacter crescentus).